We begin with the raw amino-acid sequence, 215 residues long: Cytochrome b6 (215 aa).

Residues 32–52 (IFYCLGGITFTLFLVQVATGF) form a helical membrane-spanning segment. Residue Cys35 participates in heme c binding. Residues His86 and His100 each coordinate heme b. Transmembrane regions (helical) follow at residues 90–110 (ASMM…TGGF), 116–136 (LTWI…VTGY), and 186–206 (LHTF…FLMI). The heme b site is built by His187 and His202.

Belongs to the cytochrome b family. PetB subfamily. In terms of assembly, the 4 large subunits of the cytochrome b6-f complex are cytochrome b6, subunit IV (17 kDa polypeptide, PetD), cytochrome f and the Rieske protein, while the 4 small subunits are PetG, PetL, PetM and PetN. The complex functions as a dimer. Heme b is required as a cofactor. Requires heme c as cofactor.

It is found in the plastid. Its subcellular location is the chloroplast thylakoid membrane. Component of the cytochrome b6-f complex, which mediates electron transfer between photosystem II (PSII) and photosystem I (PSI), cyclic electron flow around PSI, and state transitions. The sequence is that of Cytochrome b6 from Tupiella akineta (Green alga).